Reading from the N-terminus, the 178-residue chain is Membrane-spanning protein YciB (178 aa).

Transmembrane regions (helical) follow at residues 22–42, 52–72, 76–96, 121–141, and 151–171; these read IFIASFSLMIASLFTFIITSI, LINLIFVIVFGFLTLFYHNSS, WKVTIIYFLISIVFLINYLFI, LFWSIFFLICAVSNTYIILYF, and IFGLTILTLIAVIINGFYIYF.

Belongs to the YciB family.

The protein resides in the cell membrane. In terms of biological role, plays a role in cell envelope biogenesis, maintenance of cell envelope integrity and membrane homeostasis. In Buchnera aphidicola subsp. Baizongia pistaciae (strain Bp), this protein is Membrane-spanning protein YciB.